Reading from the N-terminus, the 427-residue chain is Glucose-6-phosphate isomerase (427 aa).

Glu277 acts as the Proton donor in catalysis. Residues His298 and Lys414 contribute to the active site.

Belongs to the GPI family.

The protein resides in the cytoplasm. It carries out the reaction alpha-D-glucose 6-phosphate = beta-D-fructose 6-phosphate. It functions in the pathway carbohydrate biosynthesis; gluconeogenesis. It participates in carbohydrate degradation; glycolysis; D-glyceraldehyde 3-phosphate and glycerone phosphate from D-glucose: step 2/4. Catalyzes the reversible isomerization of glucose-6-phosphate to fructose-6-phosphate. The polypeptide is Glucose-6-phosphate isomerase (Mycoplasma mycoides subsp. mycoides SC (strain CCUG 32753 / NCTC 10114 / PG1)).